The sequence spans 454 residues: CCA-adding enzyme (454 aa).

Serine 53 and lysine 56 together coordinate ATP. 2 residues coordinate CTP: serine 53 and lysine 56. Mg(2+) is bound by residues aspartate 65, aspartate 67, and aspartate 119. The ATP site is built by histidine 142, lysine 161, and tyrosine 170. CTP-binding residues include histidine 142, lysine 161, and tyrosine 170.

The protein belongs to the tRNA nucleotidyltransferase/poly(A) polymerase family. Archaeal CCA-adding enzyme subfamily. In terms of assembly, homodimer. Mg(2+) is required as a cofactor.

It catalyses the reaction a tRNA precursor + 2 CTP + ATP = a tRNA with a 3' CCA end + 3 diphosphate. The catalysed reaction is a tRNA with a 3' CCA end + 2 CTP + ATP = a tRNA with a 3' CCACCA end + 3 diphosphate. Functionally, catalyzes the addition and repair of the essential 3'-terminal CCA sequence in tRNAs without using a nucleic acid template. Adds these three nucleotides in the order of C, C, and A to the tRNA nucleotide-73, using CTP and ATP as substrates and producing inorganic pyrophosphate. tRNA 3'-terminal CCA addition is required both for tRNA processing and repair. Also involved in tRNA surveillance by mediating tandem CCA addition to generate a CCACCA at the 3' terminus of unstable tRNAs. While stable tRNAs receive only 3'-terminal CCA, unstable tRNAs are marked with CCACCA and rapidly degraded. The chain is CCA-adding enzyme from Thermococcus gammatolerans (strain DSM 15229 / JCM 11827 / EJ3).